We begin with the raw amino-acid sequence, 122 residues long: uncharacterized protein (122 aa).

The next 3 helical transmembrane spans lie at 21–40, 57–77, and 94–114; these read VWSWRRLFIFRVLNVVSIAI, YTHMAIPLSTCLFCLCLCICI, and LLFSVFHLVFSTIALSIYCIY.

The protein resides in the membrane. This is an uncharacterized protein from Saccharomyces cerevisiae (strain ATCC 204508 / S288c) (Baker's yeast).